The sequence spans 382 residues: ATP phosphoribosyltransferase regulatory subunit (382 aa).

It belongs to the class-II aminoacyl-tRNA synthetase family. HisZ subfamily. In terms of assembly, heteromultimer composed of HisG and HisZ subunits.

The protein resides in the cytoplasm. The protein operates within amino-acid biosynthesis; L-histidine biosynthesis; L-histidine from 5-phospho-alpha-D-ribose 1-diphosphate: step 1/9. Required for the first step of histidine biosynthesis. May allow the feedback regulation of ATP phosphoribosyltransferase activity by histidine. The chain is ATP phosphoribosyltransferase regulatory subunit from Burkholderia thailandensis (strain ATCC 700388 / DSM 13276 / CCUG 48851 / CIP 106301 / E264).